A 1430-amino-acid chain; its full sequence is Nephrocystin-4 (1430 aa).

The sufficient for basal bodies localization stretch occupies residues 824–1430; that stretch reads MRMGNVGRPP…ETFCVKVRYE (607 aa). Positions 828–857 are disordered; sequence NVGRPPEKKLKRRETLPPSNSRIITMHDGR.

Belongs to the NPHP4 family.

Its subcellular location is the cytoplasm. It is found in the cytoskeleton. The protein localises to the cilium basal body. In terms of biological role, involved in the organization of apical junctions. Required for building functional cilia. Involved in the organization of the subapical actin network in multiciliated epithelial cells. Seems to recruit int to basal bodies of motile cilia which subsequently interacts with actin-modifying proteins such as daam1. May down-regulate the canonical Wnt pathway and promote the Wnt-PCP pathway. Acts as a negative regulator of the hippo pathway. In Xenopus laevis (African clawed frog), this protein is Nephrocystin-4 (nphp4).